The primary structure comprises 368 residues: Ferrochelatase (368 aa).

Residues H209 and E290 each coordinate Fe cation. The interval 347-368 (REEQEQQAHISREEARRLGADQ) is disordered.

The protein belongs to the ferrochelatase family.

Its subcellular location is the cytoplasm. It carries out the reaction heme b + 2 H(+) = protoporphyrin IX + Fe(2+). Its pathway is porphyrin-containing compound metabolism; protoheme biosynthesis; protoheme from protoporphyrin-IX: step 1/1. In terms of biological role, catalyzes the ferrous insertion into protoporphyrin IX. This is Ferrochelatase from Janthinobacterium sp. (strain Marseille) (Minibacterium massiliensis).